We begin with the raw amino-acid sequence, 67 residues long: Large ribosomal subunit protein bL35 (67 aa).

Residues 1–32 (MPKLKNHSGAKKRFAKTATGKYKRRKAGRKHL) show a composition bias toward basic residues. Positions 1-54 (MPKLKNHSGAKKRFAKTATGKYKRRKAGRKHLLTPQSGSRKREMRQTGIIKPES) are disordered.

This sequence belongs to the bacterial ribosomal protein bL35 family.

The sequence is that of Large ribosomal subunit protein bL35 from Elusimicrobium minutum (strain Pei191).